A 160-amino-acid chain; its full sequence is SsrA-binding protein (160 aa).

It belongs to the SmpB family.

It is found in the cytoplasm. Its function is as follows. Required for rescue of stalled ribosomes mediated by trans-translation. Binds to transfer-messenger RNA (tmRNA), required for stable association of tmRNA with ribosomes. tmRNA and SmpB together mimic tRNA shape, replacing the anticodon stem-loop with SmpB. tmRNA is encoded by the ssrA gene; the 2 termini fold to resemble tRNA(Ala) and it encodes a 'tag peptide', a short internal open reading frame. During trans-translation Ala-aminoacylated tmRNA acts like a tRNA, entering the A-site of stalled ribosomes, displacing the stalled mRNA. The ribosome then switches to translate the ORF on the tmRNA; the nascent peptide is terminated with the 'tag peptide' encoded by the tmRNA and targeted for degradation. The ribosome is freed to recommence translation, which seems to be the essential function of trans-translation. The polypeptide is SsrA-binding protein (Escherichia coli O139:H28 (strain E24377A / ETEC)).